The sequence spans 500 residues: Aspartyl/glutamyl-tRNA(Asn/Gln) amidotransferase subunit B (500 aa).

The protein belongs to the GatB/GatE family. GatB subfamily. Heterotrimer of A, B and C subunits.

The catalysed reaction is L-glutamyl-tRNA(Gln) + L-glutamine + ATP + H2O = L-glutaminyl-tRNA(Gln) + L-glutamate + ADP + phosphate + H(+). The enzyme catalyses L-aspartyl-tRNA(Asn) + L-glutamine + ATP + H2O = L-asparaginyl-tRNA(Asn) + L-glutamate + ADP + phosphate + 2 H(+). Its function is as follows. Allows the formation of correctly charged Asn-tRNA(Asn) or Gln-tRNA(Gln) through the transamidation of misacylated Asp-tRNA(Asn) or Glu-tRNA(Gln) in organisms which lack either or both of asparaginyl-tRNA or glutaminyl-tRNA synthetases. The reaction takes place in the presence of glutamine and ATP through an activated phospho-Asp-tRNA(Asn) or phospho-Glu-tRNA(Gln). The protein is Aspartyl/glutamyl-tRNA(Asn/Gln) amidotransferase subunit B of Brucella ovis (strain ATCC 25840 / 63/290 / NCTC 10512).